We begin with the raw amino-acid sequence, 685 residues long: Polyphosphate kinase (685 aa).

Asparagine 45 serves as a coordination point for ATP. Mg(2+) contacts are provided by arginine 375 and arginine 405. The active-site Phosphohistidine intermediate is histidine 435. 3 residues coordinate ATP: tyrosine 468, arginine 564, and histidine 592.

Belongs to the polyphosphate kinase 1 (PPK1) family. Mg(2+) serves as cofactor. Post-translationally, an intermediate of this reaction is the autophosphorylated ppk in which a phosphate is covalently linked to a histidine residue through a N-P bond.

The catalysed reaction is [phosphate](n) + ATP = [phosphate](n+1) + ADP. Functionally, catalyzes the reversible transfer of the terminal phosphate of ATP to form a long-chain polyphosphate (polyP). The sequence is that of Polyphosphate kinase from Neisseria gonorrhoeae (strain ATCC 700825 / FA 1090).